The following is a 47-amino-acid chain: Large ribosomal subunit protein bL27c (47 aa).

Residues 1-21 (STKNGRDSNAQRLGVKKYGGE) form a disordered region.

It belongs to the bacterial ribosomal protein bL27 family.

The protein localises to the plastid. The protein resides in the chloroplast. The polypeptide is Large ribosomal subunit protein bL27c (rpl27) (Porphyridium purpureum (Red alga)).